A 130-amino-acid chain; its full sequence is Small ribosomal subunit protein uS9 (130 aa).

This sequence belongs to the universal ribosomal protein uS9 family.

This Thiobacillus denitrificans (strain ATCC 25259 / T1) protein is Small ribosomal subunit protein uS9.